A 1167-amino-acid chain; its full sequence is MTNPTILYPSYHNVLAHPIRLDSFFDPFVETFKDLKGAWEEFGKTGYMDPLKQHLQIAWDTSQNGTVDYLALTKASISLIGLIPGADAVVPFINMFVDFIFPKLFGRGSQQNAQAQFFELIIEKVKELVDEDFRNFTLNNLLNYLDGMQTALSHFQNDVQIAICQGEQPGLMLDQTPTACTPTTDHLISVRESFKDARTTIETALPHFKNPMLSTNDNTPDFNSDTVLLTLPMYTTGATLNLILHQGYIQFAERWKSVNYDESFINQTKVDLQRRIQDYSTTVSTTFEKFKPTLNPSNKESVNKYNRYVRSMTLQSLDIAATWPTLDNVNYPSNVDIQLDQTRLVFSDVAGPWEGNDNITSNIIDVLTPINTGIGFQESSDLRKFTYPRIELQSMQFHGQYVNSKSVEHCYSDGLKLNYKNKTITAGVSNIDESNQNNKHNYGPVINSPITDINVNSQNSQYLDLNSVMVNGGQKVTGCSPLSSNGNSNNAALPNQKINVIYSVQSNDKPEKHADTYRKWGYMSSHIPYDLVPENVIGDIDPDTKQPSLLLKGFPAEKGYGDSIAYVSEPLNGANAVKLTSYQVLQMEVTNQTTQKYRIRIRYATGGDTAASIWFHIIGPSGNDLTNEGHNFSSVSSRNKMFVQGNNGKYVLNILTDSIELPSGQQTILIQNTNSQDLFLDRIEFISLPSTSTPTSTNFVEPESLEKIINQVNQLFSSSSQTELAHTVSDYKIDQVVLKVNALSDDVFGVEKKALRKLVNQAKQLSKARNVLVGGNFEKGHEWALSREATMVANHELFKGDHLLLPPPTLYPSYAYQKIDESKLKSNTRYTVSGFIAQSEHLEVVVSRYGKEVHDMLDIPYEEALPISSDESPNCCKPAACQCSSCDGSQSDSHFFSYSIDVGSLQSDVNLGIEFGLRIAKPNGFAKISNLEIKEDRPLTEKEIKKVQRKEQKWKKAFNQEQAEVATTLQPTLDQINALYQNEDWNGSVHPASDYQHLSAVVVPTLPKQRHWFMEGREGEHVVLTQQFQQALDRAFQQIEEQNLIHNGNLANGLTDWTVTGDAQLTIFDEDPVLELAHWDASISQTIEIMDFEGRHRIQTACTWKRQRNSYRSTWRKRLETMTFNTTSFTTQEQTFYFEGDTVDVHVQSENNTFLIDSVELIEIIEE.

It belongs to the delta endotoxin family.

Endotoxin with nematicidal activity. This Bacillus thuringiensis protein is Pesticidal crystal protein Cry21Aa (cry21Aa).